The following is a 550-amino-acid chain: Hydroxylamine reductase (550 aa).

The [2Fe-2S] cluster site is built by cysteine 3, cysteine 6, cysteine 18, and cysteine 25. Residues histidine 249, glutamate 273, cysteine 317, cysteine 405, cysteine 433, cysteine 458, glutamate 492, and lysine 494 each coordinate hybrid [4Fe-2O-2S] cluster. Cysteine 405 bears the Cysteine persulfide mark.

It belongs to the HCP family. Requires [2Fe-2S] cluster as cofactor. The cofactor is hybrid [4Fe-2O-2S] cluster.

The protein localises to the cytoplasm. It catalyses the reaction A + NH4(+) + H2O = hydroxylamine + AH2 + H(+). In terms of biological role, catalyzes the reduction of hydroxylamine to form NH(3) and H(2)O. The polypeptide is Hydroxylamine reductase (Shigella boydii serotype 18 (strain CDC 3083-94 / BS512)).